Consider the following 166-residue polypeptide: SPbeta prophage-derived uncharacterized protein YomO (166 aa).

This chain is SPbeta prophage-derived uncharacterized protein YomO (yomO), found in Bacillus subtilis (strain 168).